We begin with the raw amino-acid sequence, 163 residues long: Phosphopantetheine adenylyltransferase (163 aa).

A substrate-binding site is contributed by S9. Residues 9-10 and H17 contribute to the ATP site; that span reads SF. The substrate site is built by K41, I75, and R89. ATP-binding positions include 90-92, E100, and 125-131; these read GIR and HLYVRSD.

Belongs to the bacterial CoaD family. As to quaternary structure, homohexamer. It depends on Mg(2+) as a cofactor.

Its subcellular location is the cytoplasm. It carries out the reaction (R)-4'-phosphopantetheine + ATP + H(+) = 3'-dephospho-CoA + diphosphate. The protein operates within cofactor biosynthesis; coenzyme A biosynthesis; CoA from (R)-pantothenate: step 4/5. Reversibly transfers an adenylyl group from ATP to 4'-phosphopantetheine, yielding dephospho-CoA (dPCoA) and pyrophosphate. This is Phosphopantetheine adenylyltransferase from Borreliella burgdorferi (strain ZS7) (Borrelia burgdorferi).